Consider the following 607-residue polypeptide: Elongation factor 4 (607 aa).

One can recognise a tr-type G domain in the interval 11–193; sequence SKIRNFSIIA…QIVEKVPAPT (183 aa). GTP contacts are provided by residues 23–28 and 140–143; these read DHGKST and NKID.

This sequence belongs to the TRAFAC class translation factor GTPase superfamily. Classic translation factor GTPase family. LepA subfamily.

Its subcellular location is the cell membrane. The catalysed reaction is GTP + H2O = GDP + phosphate + H(+). In terms of biological role, required for accurate and efficient protein synthesis under certain stress conditions. May act as a fidelity factor of the translation reaction, by catalyzing a one-codon backward translocation of tRNAs on improperly translocated ribosomes. Back-translocation proceeds from a post-translocation (POST) complex to a pre-translocation (PRE) complex, thus giving elongation factor G a second chance to translocate the tRNAs correctly. Binds to ribosomes in a GTP-dependent manner. The protein is Elongation factor 4 of Bacillus cereus (strain Q1).